A 492-amino-acid polypeptide reads, in one-letter code: MTIWVLSLAMKNTIYHAPLTFGLYALAGVLFALYTSRVCPFLATLSTREIATQVGAVFILAWLIRHTLLRQHIWARKQQFIQLDTALLFAMSLPLALYYNLQYQFTLDSNLKVLFGMTLFGFFTGALLQLSSKLRTLRQMPQSQNLALSSDERRSLVKQLIGLIVLLISTLTVMLSMVAIKDIHWLENNPARLLDGSGKISIVKEFAFLSLVLGGYITAILVLWSRMMKEILDHQERSLQAVTQGNLQVRLPVYSNDELGNVAMLTNQMLDSLEATQNEVKTTRDVAIVSLSALAESRDNETGAHILRTQEYVKALAEYLAAFPQYSTLLTPAYIELLYKSAPLHDVGKVGIPDSVLLKPGKLTDEEFTVMKEHPRIGAQALAIAERHLGTSSFLAIAKEIALTHHEKWDGTGYPAQLQGEAIPLSGRLMALADVYDALISARVYKPAFSHDKAKAIIVEGSGHHFDPAVVEAFLAVEEKFVAIAAHFKDAA.

6 helical membrane passes run 14–34 (IYHAPLTFGLYALAGVLFALY), 49–69 (EIATQVGAVFILAWLIRHTLL), 80–100 (FIQLDTALLFAMSLPLALYYN), 111–131 (LKVLFGMTLFGFFTGALLQLS), 160–180 (LIGLIVLLISTLTVMLSMVAI), and 205–225 (EFAFLSLVLGGYITAILVLWS). Positions 226–278 (RMMKEILDHQERSLQAVTQGNLQVRLPVYSNDELGNVAMLTNQMLDSLEATQN) constitute an HAMP domain. Positions 280–490 (VKTTRDVAIV…FVAIAAHFKD (211 aa)) constitute an HD-GYP domain.

The protein resides in the cell inner membrane. It carries out the reaction 3',3'-c-di-GMP + 2 H2O = 2 GMP + 2 H(+). Functionally, phosphodiesterase (PDE) that catalyzes the hydrolysis of cyclic diguanylate (c-di-GMP) to GMP in vitro. Increases motility and decreases biofilm formation in vivo. This Vibrio cholerae serotype O1 (strain ATCC 39315 / El Tor Inaba N16961) protein is Cyclic di-GMP phosphodiesterase VC_1295.